Reading from the N-terminus, the 714-residue chain is Putative glutamine--fructose-6-phosphate aminotransferase [isomerizing] (714 aa).

Cys-2 functions as the Nucleophile; for GATase activity in the catalytic mechanism. The Glutamine amidotransferase type-2 domain maps to 2–321 (CGIFGYCNFL…DNDIAHIYDG (320 aa)). Over residues 266-280 (STTSTFNHGSSTETP) the composition is skewed to polar residues. Positions 266–285 (STTSTFNHGSSTETPAENGL) are disordered. SIS domains are found at residues 387–526 (WLTE…DLVS) and 559–704 (CDKK…VDLP).

The catalysed reaction is D-fructose 6-phosphate + L-glutamine = D-glucosamine 6-phosphate + L-glutamate. Its pathway is nucleotide-sugar biosynthesis; UDP-N-acetyl-alpha-D-glucosamine biosynthesis; alpha-D-glucosamine 6-phosphate from D-fructose 6-phosphate: step 1/1. In terms of biological role, involved in amino sugar synthesis (formation of chitin, supplies the amino sugars of asparagine-linked oligosaccharides of glycoproteins). This is Putative glutamine--fructose-6-phosphate aminotransferase [isomerizing] from Saccharomyces cerevisiae (strain YJM789) (Baker's yeast).